A 333-amino-acid chain; its full sequence is GTP 3',8-cyclase (333 aa).

One can recognise a Radical SAM core domain in the interval 7–221; it reads KFGRVHDYIR…FEACDAIGFE (215 aa). Arginine 16 contacts GTP. [4Fe-4S] cluster-binding residues include cysteine 23 and cysteine 27. Position 29 (tyrosine 29) interacts with S-adenosyl-L-methionine. Cysteine 30 provides a ligand contact to [4Fe-4S] cluster. A GTP-binding site is contributed by arginine 66. Position 70 (glycine 70) interacts with S-adenosyl-L-methionine. Residue threonine 97 participates in GTP binding. Serine 121 provides a ligand contact to S-adenosyl-L-methionine. Position 158 (lysine 158) interacts with GTP. Methionine 192 is a binding site for S-adenosyl-L-methionine. Residues cysteine 257 and cysteine 260 each coordinate [4Fe-4S] cluster. Residue 262–264 coordinates GTP; sequence RLR. Residue cysteine 274 participates in [4Fe-4S] cluster binding.

This sequence belongs to the radical SAM superfamily. MoaA family. In terms of assembly, monomer and homodimer. It depends on [4Fe-4S] cluster as a cofactor.

It carries out the reaction GTP + AH2 + S-adenosyl-L-methionine = (8S)-3',8-cyclo-7,8-dihydroguanosine 5'-triphosphate + 5'-deoxyadenosine + L-methionine + A + H(+). It functions in the pathway cofactor biosynthesis; molybdopterin biosynthesis. Catalyzes the cyclization of GTP to (8S)-3',8-cyclo-7,8-dihydroguanosine 5'-triphosphate. The sequence is that of GTP 3',8-cyclase from Listeria welshimeri serovar 6b (strain ATCC 35897 / DSM 20650 / CCUG 15529 / CIP 8149 / NCTC 11857 / SLCC 5334 / V8).